We begin with the raw amino-acid sequence, 154 residues long: Ecotin-like protein 2 (154 aa).

The protein belongs to the protease inhibitor I11 (ecotin) family.

This is Ecotin-like protein 2 from Leishmania braziliensis.